Reading from the N-terminus, the 365-residue chain is L-lactate oxidase (365 aa).

Residues 6–365 (RIPPGVWNAI…ITHDTLTPSC (360 aa)) enclose the FMN hydroxy acid dehydrogenase domain. Y32 serves as a coordination point for pyruvate. FMN contacts are provided by residues 85–87 (PVA), S114, and Q135. Position 137 (Y137) interacts with pyruvate. FMN is bound by residues T163, K237, and S259. The pyruvate site is built by H261 and R264. H261 acts as the Proton acceptor in catalysis. Residues 292 to 296 (DGGVR) and R316 each bind FMN.

Belongs to the FMN-dependent alpha-hydroxy acid dehydrogenase family. As to quaternary structure, homotetramer. Requires FMN as cofactor.

It catalyses the reaction (S)-lactate + O2 = pyruvate + H2O2. The enzyme catalyses glycolate + O2 = glyoxylate + H2O2. Its function is as follows. Catalyzes the oxidation of (S)-lactate (L-lactate) to pyruvate, with a reduction of O2 to H2O2. To a lesser extent is also able to use glycolate as substrate. This chain is L-lactate oxidase, found in Alicycliphilus denitrificans (strain DSM 14773 / CIP 107495 / K601).